Reading from the N-terminus, the 207-residue chain is Small ribosomal subunit protein uS4 (207 aa).

Residues 31–55 (KCKLDSKPGQHGRTSGARTSDYGTQ) are disordered. Positions 42–53 (GRTSGARTSDYG) are enriched in polar residues. An S4 RNA-binding domain is found at 97 to 160 (SRLDNVVYRM…KKQARIIEAL (64 aa)).

Belongs to the universal ribosomal protein uS4 family. Part of the 30S ribosomal subunit. Contacts protein S5. The interaction surface between S4 and S5 is involved in control of translational fidelity.

Functionally, one of the primary rRNA binding proteins, it binds directly to 16S rRNA where it nucleates assembly of the body of the 30S subunit. Its function is as follows. With S5 and S12 plays an important role in translational accuracy. The protein is Small ribosomal subunit protein uS4 of Burkholderia multivorans (strain ATCC 17616 / 249).